Consider the following 41-residue polypeptide: Large ribosomal subunit protein bL36 (41 aa).

The protein belongs to the bacterial ribosomal protein bL36 family.

This chain is Large ribosomal subunit protein bL36, found in Edwardsiella ictaluri (strain 93-146).